Here is a 312-residue protein sequence, read N- to C-terminus: Bark storage protein B (312 aa).

The first 24 residues, 1–24 (MPQQSMQASLRDPIAEIERSNCKI), serve as a signal peptide directing secretion. N-linked (GlcNAc...) asparagine glycosylation is present at N70.

The protein to wound-inducible poplar endochitinases. Monomer. As to expression, bark tissue.

In terms of biological role, may play a role in nitrogen storage. In Populus deltoides (Eastern poplar), this protein is Bark storage protein B (BSP).